A 405-amino-acid polypeptide reads, in one-letter code: MIPGNRMLMVILLCQVLLGGTNHASLIPETGRKKVAELQGQAGSGRRSAQSHELLRGFETTLLQMFGLRRRPQPSKSAVIPSYMLDLYRLQSGEEEERSLQEISLQYPERSASRANTVRSFHHEEHLESVPGPSEAPRIRFVFNLSSVPDNEVISSEELRLYREQVEEPSAAWERGFHRINIYEVMKPLSERSQAITRLLDTRLVHHNVTRWETFDVSPAVIRWTKDKQPNHGLVIEVTHLHQAQTHQGKHVRISRSLPQGHGGDWAQLRPLLVTFGHDGRGHALTRRARRSPKHHGSRKNKKNCRRHALYVDFSDVGWNDWIVAPPGYQAFYCHGDCPFPLADHLNSTNHAIVQTLVNSVNSSIPKACCVPTELSAISMLYLDEYDKVVLKNYQEMVVEGCGCR.

The signal sequence occupies residues 1–19; sequence MIPGNRMLMVILLCQVLLG. Residues 20–291 constitute a propeptide that is removed on maturation; sequence GTNHASLIPE…GHALTRRARR (272 aa). N-linked (GlcNAc...) asparagine glycosylation is found at asparagine 144, asparagine 208, asparagine 347, and asparagine 362. Cystine bridges form between cysteine 305–cysteine 370, cysteine 334–cysteine 402, and cysteine 338–cysteine 404.

It belongs to the TGF-beta family. Homodimer; disulfide-linked. Part of a complex consisting of TWSG1 and CHRD. Forms a ternary complex with chordin/CHRD and TSKU.

The protein localises to the secreted. Negatively regulates the structure and function of the limb apical ectodermal ridge. This is Bone morphogenetic protein 4 (BMP4) from Gallus gallus (Chicken).